The sequence spans 483 residues: tRNA-2-methylthio-N(6)-dimethylallyladenosine synthase (483 aa).

The 118-residue stretch at 31–148 (KKLYIETQGC…LPQMLDQHHA (118 aa)) folds into the MTTase N-terminal domain. Cys-40, Cys-77, Cys-111, Cys-192, Cys-196, and Cys-199 together coordinate [4Fe-4S] cluster. A Radical SAM core domain is found at 178-410 (RVEGFKAFVS…QQVIKQSSIE (233 aa)). The 65-residue stretch at 413–477 (DAMLGKIERV…LNLVYGELLN (65 aa)) folds into the TRAM domain.

This sequence belongs to the methylthiotransferase family. MiaB subfamily. In terms of assembly, monomer. Requires [4Fe-4S] cluster as cofactor.

The protein resides in the cytoplasm. The enzyme catalyses N(6)-dimethylallyladenosine(37) in tRNA + (sulfur carrier)-SH + AH2 + 2 S-adenosyl-L-methionine = 2-methylsulfanyl-N(6)-dimethylallyladenosine(37) in tRNA + (sulfur carrier)-H + 5'-deoxyadenosine + L-methionine + A + S-adenosyl-L-homocysteine + 2 H(+). Functionally, catalyzes the methylthiolation of N6-(dimethylallyl)adenosine (i(6)A), leading to the formation of 2-methylthio-N6-(dimethylallyl)adenosine (ms(2)i(6)A) at position 37 in tRNAs that read codons beginning with uridine. This chain is tRNA-2-methylthio-N(6)-dimethylallyladenosine synthase, found in Acinetobacter baumannii (strain ACICU).